The chain runs to 178 residues: Nucleolar protein 16 (178 aa).

The disordered stretch occupies residues 1-31 (MPKAKGKTRRQKFGYSVNRKRLNRNARRKAA). At T8 the chain carries Phosphothreonine. S16 bears the Phosphoserine mark. K74 participates in a covalent cross-link: Glycyl lysine isopeptide (Lys-Gly) (interchain with G-Cter in SUMO2). K90 carries the N6-acetyllysine modification. A Phosphothreonine modification is found at T144. Residues F166, L167, K172, and R173 each participate in a glycyl lysine isopeptide (Lys-Gly) (interchain with G-Cter in SUMO2) cross-link.

This sequence belongs to the NOP16 family.

The protein localises to the nucleus. Its subcellular location is the nucleolus. This is Nucleolar protein 16 (NOP16) from Homo sapiens (Human).